The sequence spans 453 residues: MKLQHAKFHFVGVGGIGMCGLAELLHNIGAKVSGSDQAENANTERLKELGVKVFKGHASSNVGDADVVVYSSAIQYGNPEISEARARQIPLIPRAEALAEIMRLKRGIAVAGTHGKTTTTSMTSAIFLEANLSPTIVIGGRFELIKSTAMLGSGEWLVAEADESDGSFHKLSPEIAIITNIDSDHLEHFKTFENVQKSFHDFALKVPFYGKVIVCGDDPLVRQIFENFPKRILFYGFDEKNDLVVTGEHGHYAVHRNDRLLGTKHLVGEFDLKVPGRHNALNAVAAICAGVAAGIPFATCAKGLQRYEGVDRRFHFKGEKKGIKVYDDYGHHPTEVRAVLQAFREKYPKQRLVVFFQPHRYSRTQHCWHDFTTAFMEADQVLLTDIYPAGEAPIPGVTSEKLASEMKHEHAQYFVRDDKATQKILGMLKEGDVFVTLGAGDGWKLGLEVLNQL.

ATP is bound at residue G112–T118.

It belongs to the MurCDEF family.

The protein localises to the cytoplasm. It carries out the reaction UDP-N-acetyl-alpha-D-muramate + L-alanine + ATP = UDP-N-acetyl-alpha-D-muramoyl-L-alanine + ADP + phosphate + H(+). It participates in cell wall biogenesis; peptidoglycan biosynthesis. Cell wall formation. This is UDP-N-acetylmuramate--L-alanine ligase from Bdellovibrio bacteriovorus (strain ATCC 15356 / DSM 50701 / NCIMB 9529 / HD100).